The following is a 164-amino-acid chain: Ubiquitin-fold modifier-conjugating enzyme 1 (164 aa).

The active-site Glycyl thioester intermediate is the cysteine 116.

The protein belongs to the ubiquitin-conjugating enzyme family. UFC1 subfamily.

Functionally, E2-like enzyme which forms an intermediate with UFM1 via a thioester linkage. The sequence is that of Ubiquitin-fold modifier-conjugating enzyme 1 from Drosophila erecta (Fruit fly).